Reading from the N-terminus, the 827-residue chain is Tuftelin-interacting protein 11 (827 aa).

Disordered regions lie at residues 31 to 129 (FNPH…KGFV) and 179 to 203 (QRKG…DFPV). Over residues 41–60 (TKEEATYGVWAERDSDEERP) the composition is skewed to basic and acidic residues. The segment covering 88 to 98 (DVSDEDSDEDE) has biased composition (acidic residues). Residues 99–112 (KPVKQEEIPKEFVP) are compositionally biased toward basic and acidic residues. The G-patch domain maps to 145-191 (TKGIGQKLLQKMGYVPGRGLGKNAQGIINPIEAKQRKGKGAVGAYGS).

The protein belongs to the TFP11/STIP family. As to quaternary structure, identified in the spliceosome C complex.

It is found in the nucleus. Functionally, involved in pre-mRNA splicing, specifically in spliceosome disassembly during late-stage splicing events. This is Tuftelin-interacting protein 11 (TFIP11) from Gallus gallus (Chicken).